Consider the following 461-residue polypeptide: Ribosomal protein uS12 methylthiotransferase RimO (461 aa).

The 116-residue stretch at 9–124 folds into the MTTase N-terminal domain; that stretch reads PRIGMVSLGC…VMDAVHLNLP (116 aa). [4Fe-4S] cluster contacts are provided by cysteine 18, cysteine 54, cysteine 83, cysteine 159, cysteine 163, and cysteine 166. Residues 145–387 enclose the Radical SAM core domain; the sequence is LTPRHYAYLK…AVAEAVSSQK (243 aa). Positions 389–461 constitute a TRAM domain; it reads QQRVGATMQV…QGHDLIAVPV (73 aa).

It belongs to the methylthiotransferase family. RimO subfamily. Requires [4Fe-4S] cluster as cofactor.

It localises to the cytoplasm. It carries out the reaction L-aspartate(89)-[ribosomal protein uS12]-hydrogen + (sulfur carrier)-SH + AH2 + 2 S-adenosyl-L-methionine = 3-methylsulfanyl-L-aspartate(89)-[ribosomal protein uS12]-hydrogen + (sulfur carrier)-H + 5'-deoxyadenosine + L-methionine + A + S-adenosyl-L-homocysteine + 2 H(+). In terms of biological role, catalyzes the methylthiolation of an aspartic acid residue of ribosomal protein uS12. The polypeptide is Ribosomal protein uS12 methylthiotransferase RimO (Polaromonas naphthalenivorans (strain CJ2)).